We begin with the raw amino-acid sequence, 423 residues long: MAKKNGTSWFTAVKKILWSPSKDSDKKTHHHKETDIKRKEKKGWIFRKTKLETTNSVLQHTVRTVEAEEKEKPPVIVSSVEEGVTEIVKLTATPGFIRRHWAAIIIQTAFRGYLSRRALRALKGIVKLQALVRGNNVRNQAKLTLRCIKALVRVQDQVLNHHQQQRSRVLLSPPSRNYNIEARRNSMFAESNGFWDTKTYLQDIRSRRSLSRDMNRCNNEFYSEETELILQKKLEIAIKREKAQALALSNQIRSRSSRNQSAGDDRELLERTQWLDRWMATKQWDDTITNSTNVRDPIKTLEAVTTHHHQRSYPATPPSCRASRSVMVRSASPRIPCSPSSMQPNYMSATESAKAKARTQSTPRRRPMTAKKRLCYAEEESLRSPSFKSCLWGDHESDYSCCYGDGFAGKISPCSTTELRWLK.

IQ domains lie at 99–127 and 128–150; these read RHWAAIIIQTAFRGYLSRRALRALKGIVK and LQALVRGNNVRNQAKLTLRCIKA. The stretch at 231–251 forms a coiled coil; sequence QKKLEIAIKREKAQALALSNQ. Residues 235-252 are calmodulin-binding; it reads EIAIKREKAQALALSNQI.

The protein belongs to the IQD family. As to quaternary structure, binds to multiple calmodulin (CaM) in the presence of Ca(2+) and CaM-like proteins.

It is found in the cytoplasm. The protein localises to the cytoskeleton. Its subcellular location is the cell membrane. Its function is as follows. May be involved in cooperative interactions with calmodulins or calmodulin-like proteins. Recruits calmodulin proteins to microtubules, thus being a potential scaffold in cellular signaling and trafficking. Regulates cell shape and elongation in aerial organs (i.e. cotyledons, leaves, and hypocotyls) probably by regulating cortical microtubules (MT) arrays orientation. May associate with nucleic acids and regulate gene expression at the transcriptional or post-transcriptional level. The protein is Protein IQ-DOMAIN 16 of Arabidopsis thaliana (Mouse-ear cress).